Here is a 1011-residue protein sequence, read N- to C-terminus: MATSSLCSSFTSQTCNPHSRPHRKTLTLPGSVFLCRQFHLNSPSVSKTRRIRTRQSGPVASLGGLLGGIFKGTDTGEATRKQYAAIVNTINGLEPKISALSDSELRDMTFASRERAQKGESLDSLLPEAFAVVREASKRVLGLRPFDVQLIGGMVLHKGEIAEMRTGEGKTLVAILPAYLNALVGKGVHVVTVNDYLARRDCEWVGQVPRFLGMKVGLIQQNMTSEQKKENYLCDITYVTNSELGFDFLRDNLATSVEELVIRGFNYCVIDEVDSILIDEARTPLIISGPAEKSSDQYFKAAKIADAFERDIHYTVDEKQKSVLLSEQGYEDAEEILAVKDLYDPREQWASFVINAIKAKELFLRDVNYIIRGKEVLIVDEFTGRVMQGRRWSDGLHQAVEAKEGLPIQNETVTLASISYQNFFLQFPKLCGMTGTAATEITEFESIYKLKVTIVPTNKPMIRKDESDVVFRATTGKWRAVVVEISRMNKTGRPVLVGTTSVEQSDSLSQQLKEAGILHEVLNAKPENVEREAEIVAQSGRLGAVTIATNMAGRGTDIILGGNAEFMARLKLREIMMPRVVKLVAEGEFVSVKKPPPSKTWKVNEKLFPCQLSNQNTELAEKAVQLAVKTWGKRSLTELEAEERLSYSCEKGPAQDEVIAELRNAFLEISKEYKVFTEEERKKVVAAGGLHVVGTERHESRRIDNQLRGRSGRQGDLGSSRFFLSLEDNIFRIFGGDRIQGLMRAFRVEDLPIESQMLTKALDEAQKKVENYFFDIRKQLFEYDEVLNSQRDRVYTERRRALQSVNLQSLLIEYAELTIDDILEANIGSDAPKESWDLDKLIAKIQQYCYLLTDLTPDLLLNECSDYEGLRSYLRLRGKEAYLQKRDIVEQQAPGLMKEAERFLILSNIDRLWKEHLQALKFVQQAVGLRGYAQRDPLIEYKLEGYNLFLEMMAQIRRNVIYSIYQFKPVLLKQDQDKMENQKSGKRNARPPTDTNPDPVGTVEPSTSASS.

Polar residues predominate over residues 1–17; it reads MATSSLCSSFTSQTCNP. The tract at residues 1 to 22 is disordered; it reads MATSSLCSSFTSQTCNPHSRPH. A chloroplast-targeting transit peptide spans 1–59; the sequence is MATSSLCSSFTSQTCNPHSRPHRKTLTLPGSVFLCRQFHLNSPSVSKTRRIRTRQSGPV. ATP is bound at residue 164 to 171; the sequence is MRTGEGKT. Residues 976–1011 form a disordered region; it reads QDKMENQKSGKRNARPPTDTNPDPVGTVEPSTSASS.

Belongs to the SecA family.

It is found in the plastid. The protein localises to the chloroplast stroma. It localises to the chloroplast thylakoid membrane. It catalyses the reaction ATP + H2O + chloroplast-proteinSide 1 = ADP + phosphate + chloroplast-proteinSide 2.. Its function is as follows. Has a central role in coupling the hydrolysis of ATP to the transfer of proteins across the thylakoid membrane. Facilitates the transport of precursor proteins from the chloroplast stroma to thylakoid lumen. The protein is Protein translocase subunit SecA, chloroplastic of Pisum sativum (Garden pea).